A 138-amino-acid polypeptide reads, in one-letter code: Molluscan insulin-related peptide 5 (138 aa).

The first 31 residues, 1–31 (MAGVRLVFTKAFMVTVLLTLLLNIGVKPAEG), serve as a signal peptide directing secretion. Gln-32 carries the post-translational modification Pyrrolidone carboxylic acid. 3 disulfides stabilise this stretch: Cys-48-Cys-124, Cys-60-Cys-137, and Cys-123-Cys-128. The propeptide at 72–84 (DAETGWLLPETMV) is C-beta peptide like. The propeptide at 87–111 (NAQTDLDDPLRNIKLSSESALTYLT) is C-alpha peptide like. Gln-114 is subject to Pyrrolidone carboxylic acid.

The protein belongs to the insulin family. As to quaternary structure, heterodimer of a B chain and an A chain linked by two disulfide bonds. Expressed in the cerebral light-green cells which are giant neuroendocrines cells involved in the control of growth.

The protein localises to the cytoplasmic vesicle. It is found in the secretory vesicle. The sequence is that of Molluscan insulin-related peptide 5 from Lymnaea stagnalis (Great pond snail).